Consider the following 561-residue polypeptide: Potassium-transporting ATPase potassium-binding subunit (561 aa).

The next 12 membrane-spanning stretches (helical) occupy residues Leu5–Val25, Tyr60–Leu80, Val86–Val106, Gly131–Ile151, Ile177–Ser197, Pro247–Thr267, Leu281–Ala301, Phe324–Val344, Gly376–Gly396, Ala415–Leu435, Ala488–Ala508, and Gly537–Ala557.

It belongs to the KdpA family. In terms of assembly, the system is composed of three essential subunits: KdpA, KdpB and KdpC.

It is found in the cell membrane. Part of the high-affinity ATP-driven potassium transport (or Kdp) system, which catalyzes the hydrolysis of ATP coupled with the electrogenic transport of potassium into the cytoplasm. This subunit binds the extracellular potassium ions and delivers the ions to the membrane domain of KdpB through an intramembrane tunnel. The polypeptide is Potassium-transporting ATPase potassium-binding subunit (Rhodococcus opacus (strain B4)).